Reading from the N-terminus, the 285-residue chain is Cytochrome P450 monooxygenase eupD (285 aa).

Residues 1 to 19 form the signal peptide; sequence MSIAGLVTTLPWLMNMLRA. Position 229 (Cys-229) interacts with heme.

This sequence belongs to the cytochrome P450 family. It depends on heme as a cofactor.

Its pathway is secondary metabolite biosynthesis; terpenoid biosynthesis. Its function is as follows. Cytochrome P450 monooxygenase; part of the gene cluster that mediates the biosynthesis of eupenifeldin, a bistropolone meroterpenoid that acts as an antitumor agent. The first step of eupenifeldin biosynthesis is the biosynthesis of 3-methylorcinaldehyde performed by the non-reducing polyketide synthase eupA. Oxidative dearomatization of 3-methylorcinaldehyde likely catalyzed by the FAD-dependent monooxygenase eupB is followed by oxidative ring expansion by the 2-oxoglutarate-dependent dioxygenase eupC to provide the first tropolone metabolite, tropolone stipitaldehyde. In parallel, generation of sesquiterpene alpha-humulene from farnesylpyrophosphate (FPP) is catalyzed by the terpene cyclase eupE. The cytochrome P450 monooxygenase eupD then hydroxylates humulene to humulenol. The putative Diels-Alderase eupF probably catalyzes the formation of the tropolone-humulene skeleton by linking humulenol and the polyketide moiety. The short-chain dehydrogenase/reductase eupG and the flavin-dependent monooxygenase eupH are also essential for eupenifeldin biosynthesis and are likely the additional decorating enzymes of the tropolone-humulene skeleton to produce final eupenifeldin or derivatives. This Phoma sp protein is Cytochrome P450 monooxygenase eupD.